Here is a 108-residue protein sequence, read N- to C-terminus: Mitochondrial pyruvate carrier 4 (108 aa).

Transmembrane regions (helical) follow at residues Ile-19–Ile-35, Ile-51–Ile-67, and Leu-74–Ala-90.

It belongs to the mitochondrial pyruvate carrier (MPC) (TC 2.A.105) family.

The protein resides in the mitochondrion inner membrane. Mediates the uptake of pyruvate into mitochondria. The polypeptide is Mitochondrial pyruvate carrier 4 (Arabidopsis thaliana (Mouse-ear cress)).